The chain runs to 509 residues: Scavenger receptor class B member 1 (509 aa).

Over 1 to 11 (MGGSARARWVA) the chain is Cytoplasmic. A helical membrane pass occupies residues 12-32 (VGLGVVGLLCAVLGVVMILVM). The Extracellular segment spans residues 33-440 (PSLIKQQVLK…YTQLVLMPQV (408 aa)). N-linked (GlcNAc...) asparagine glycans are attached at residues asparagine 102, asparagine 108, asparagine 173, asparagine 212, asparagine 227, asparagine 255, asparagine 310, asparagine 330, and asparagine 383. A disulfide bridge connects residues cysteine 251 and cysteine 384. Residues 441 to 461 (LQYVQYVLLGLGGLLLLVPVI) form a helical membrane-spanning segment. The Cytoplasmic segment spans residues 462–509 (YQLRSQEKCFLFWSGSKKGSQDKEAIQAYSESLMSPAAKGTVLQEAKL).

It belongs to the CD36 family. Post-translationally, N-glycosylated. In terms of processing, the six cysteines of the extracellular domain are all involved in intramolecular disulfide bonds.

The protein localises to the cell membrane. It is found in the membrane. The protein resides in the caveola. Receptor for different ligands such as phospholipids, cholesterol ester, lipoproteins, phosphatidylserine and apoptotic cells. Receptor for HDL, mediating selective uptake of cholesteryl ether and HDL-dependent cholesterol efflux. Also facilitates the flux of free and esterified cholesterol between the cell surface and apoB-containing lipoproteins and modified lipoproteins, although less efficiently than HDL. May be involved in the phagocytosis of apoptotic cells, via its phosphatidylserine binding activity. The protein is Scavenger receptor class B member 1 (SCARB1) of Cricetulus griseus (Chinese hamster).